We begin with the raw amino-acid sequence, 460 residues long: UDP-N-acetylmuramoylalanine--D-glutamate ligase (460 aa).

Position 115 to 121 (glycine 115 to threonine 121) interacts with ATP.

This sequence belongs to the MurCDEF family.

Its subcellular location is the cytoplasm. The catalysed reaction is UDP-N-acetyl-alpha-D-muramoyl-L-alanine + D-glutamate + ATP = UDP-N-acetyl-alpha-D-muramoyl-L-alanyl-D-glutamate + ADP + phosphate + H(+). It participates in cell wall biogenesis; peptidoglycan biosynthesis. Functionally, cell wall formation. Catalyzes the addition of glutamate to the nucleotide precursor UDP-N-acetylmuramoyl-L-alanine (UMA). In Chlorobium luteolum (strain DSM 273 / BCRC 81028 / 2530) (Pelodictyon luteolum), this protein is UDP-N-acetylmuramoylalanine--D-glutamate ligase.